The sequence spans 602 residues: Alpha-(1-&gt;6)-mannopyranosyltransferase B (602 aa).

A run of 13 helical transmembrane segments spans residues 105 to 125 (IGTM…ALPV), 148 to 168 (MIVL…APLV), 190 to 210 (TFGA…QDIY), 244 to 264 (VPFI…SIAA), 274 to 294 (IVGG…AAGW), 320 to 340 (LILH…FLLV), 368 to 388 (GVLI…LGFV), 404 to 424 (VVAI…TVVV), 448 to 468 (WMSM…NLGL), 472 to 492 (TAAM…AFMV), 503 to 523 (IHAV…FPVV), 546 to 566 (LGVI…GLAL), and 571 to 591 (VFSI…VGWW).

It belongs to the MptA/B family.

Its subcellular location is the membrane. It participates in cell wall biogenesis; cell wall polysaccharide biosynthesis. In terms of biological role, involved in the initiation of core alpha-(1-&gt;6) mannan biosynthesis of lipomannan (LM-A) and multi-mannosylated polymer (LM-B), extending triacylatedphosphatidyl-myo-inositol dimannoside (Ac1PIM2) and mannosylated glycolipid, 1,2-di-O-C16/C18:1-(alpha-D-mannopyranosyl)-(1-&gt;4)-(alpha-D-glucopyranosyluronic acid)-(1-&gt;3)-glycerol (Man1GlcAGroAc2), respectively. Catalyzes the addition of alpha-(1-&gt;6)-mannose residue. The polypeptide is Alpha-(1-&gt;6)-mannopyranosyltransferase B (mptB) (Corynebacterium glutamicum (strain ATCC 13032 / DSM 20300 / JCM 1318 / BCRC 11384 / CCUG 27702 / LMG 3730 / NBRC 12168 / NCIMB 10025 / NRRL B-2784 / 534)).